A 489-amino-acid polypeptide reads, in one-letter code: Zeta-carotene desaturase (489 aa).

The protein belongs to the zeta carotene desaturase family. It depends on NAD(+) as a cofactor. NADP(+) is required as a cofactor. The cofactor is FAD.

It catalyses the reaction 9,9'-di-cis-zeta-carotene + 2 a quinone = 7,7',9,9'-tetra-cis-lycopene + 2 a quinol. Its pathway is carotenoid biosynthesis; lycopene biosynthesis. Catalyzes the conversion of zeta-carotene to lycopene via the intermediary of neurosporene. It carries out two consecutive desaturations (introduction of double bonds) at positions C-7 and C-7'. The protein is Zeta-carotene desaturase (crtQ) of Synechocystis sp. (strain ATCC 27184 / PCC 6803 / Kazusa).